An 880-amino-acid polypeptide reads, in one-letter code: Probable LRR receptor-like serine/threonine-protein kinase At2g28960 (880 aa).

A signal peptide spans 1–24 (MEGRRQRLLVFIFGALAITHLVQA). Over 25–511 (QPPDQRGFIS…NNNNQTYIVP (487 aa)) the chain is Extracellular. Asn-180, Asn-201, Asn-228, Asn-254, Asn-287, Asn-403, Asn-430, and Asn-441 each carry an N-linked (GlcNAc...) asparagine glycan. LRR repeat units lie at residues 409-430 (RIIS…AFQN), 433-455 (ELRK…LASM), and 457-476 (SLSI…PKLL). Asn-505 carries N-linked (GlcNAc...) asparagine glycosylation. The chain crosses the membrane as a helical span at residues 512-532 (VVASVASVLIIIAVLILILVF). At 533-880 (KKRRPTQVDS…FTTEINPKAR (348 aa)) the chain is on the cytoplasmic side. At Thr-564 the chain carries Phosphothreonine. The Protein kinase domain maps to 573–846 (DNFERVLGEG…QVTNELKQCL (274 aa)). Residues 579 to 587 (LGEGGFGVV) and Lys-601 contribute to the ATP site. Phosphotyrosine is present on Tyr-646. Asp-698 acts as the Proton acceptor in catalysis. Position 732 is a phosphoserine (Ser-732). Thr-733 and Thr-738 each carry phosphothreonine. Residue Tyr-746 is modified to Phosphotyrosine. Residues 854-880 (GVREDMGSRSSVEMSTSFTTEINPKAR) are disordered. Over residues 861-880 (SRSSVEMSTSFTTEINPKAR) the composition is skewed to polar residues.

It belongs to the protein kinase superfamily. Ser/Thr protein kinase family.

The protein resides in the membrane. It carries out the reaction L-seryl-[protein] + ATP = O-phospho-L-seryl-[protein] + ADP + H(+). The enzyme catalyses L-threonyl-[protein] + ATP = O-phospho-L-threonyl-[protein] + ADP + H(+). The chain is Probable LRR receptor-like serine/threonine-protein kinase At2g28960 from Arabidopsis thaliana (Mouse-ear cress).